The following is a 361-amino-acid chain: Chorismate synthase (361 aa).

Residues R48 and R54 each coordinate NADP(+). FMN-binding positions include 125–127 (RSS), 238–239 (NA), G278, 293–297 (KPTSS), and R319.

Belongs to the chorismate synthase family. As to quaternary structure, homotetramer. FMNH2 serves as cofactor.

It catalyses the reaction 5-O-(1-carboxyvinyl)-3-phosphoshikimate = chorismate + phosphate. It functions in the pathway metabolic intermediate biosynthesis; chorismate biosynthesis; chorismate from D-erythrose 4-phosphate and phosphoenolpyruvate: step 7/7. Functionally, catalyzes the anti-1,4-elimination of the C-3 phosphate and the C-6 proR hydrogen from 5-enolpyruvylshikimate-3-phosphate (EPSP) to yield chorismate, which is the branch point compound that serves as the starting substrate for the three terminal pathways of aromatic amino acid biosynthesis. This reaction introduces a second double bond into the aromatic ring system. The sequence is that of Chorismate synthase from Salmonella choleraesuis (strain SC-B67).